A 1077-amino-acid chain; its full sequence is MKNKRVLAKITALVVLLGVFFVLPSNISQLYADYEVVHDTFEVNFDGWCNLGVDTYLTAVENEGNNGTRGMMVINRSSASDGAYSEKGFYLDGGVEYKYSVFVKHNGTGTETFKLSVSYLDSETEEENKEVIATKDVVAGEWTEISAKYKAPKTAVNITLSITTDSTVDFIFDDVTITRKGMAEANTVYAANAVLKDMYANYFRVGSVLNSGTVNNSSIKALILREFNSITCENEMKPDATLVQSGSTNTNIRVSLNRAASILNFCAQNNIAVRGHTLVWHSQTPQWFFKDNFQDNGNWVSQSVMDQRLESYIKNMFAEIQRQYPSLNLYAYDVVNEAVSDDANRTRYYGGAREPGYGNGRSPWVQIYGDNKFIEKAFTYARKYAPANCKLYYNDYNEYWDHKRDCIASICANLYNKGLLDGVGMQSHINADMNGFSGIQNYKAALQKYINIGCDVQITELDISTENGKFSLQQQADKYKAVFQAAVDINRTSSKGKVTAVCVWGPNDANTWLGSQNAPLLFNANNQPKPAYNAVASIIPQSEWGDGNNPAGGGGGGKPEEPDANGYYYHDTFEGSVGQWTARGPAEVLLSGRTAYKGSESLLVRNRTAAWNGAQRALNPRTFVPGNTYCFSVVASFIEGASSTTFCMKLQYVDGSGTQRYDTIDMKTVGPNQWVHLYNPQYRIPSDATDMYVYVETADDTINFYIDEAIGAVAGTVIEGPAPQPTQPPVLLGDVNGDGTINSTDLTMLKRSVLRAITLTDDAKARADVDKNGSINSTDVLLLSRYLLRVIDKFPVAENPSSSFKYESAVQYRPAPDSYLNPCPQAGRIVKETYTGINGTKSLNVYLPYGYDPNKKYNIFYLMHGGGENENTIFSNDVKLQNILDHAIMNGELEPLIVVTPTFNGGNCTAQNFYQEFRQNVIPFVESKYSTYAESTTPQGIAASRMHRGFGGFSMGGLTTWYVMVNCLDYVAYFMPLSGDYWYGNSPQDKANSIAEAINRSGLSKREYFVFAATGSDHIAYANMNPQIEAMKALPHFDYTSDFSKGNFYFLVAPGATHWWGYVRHYIYDALPYFFHE.

The first 26 residues, 1–26, serve as a signal peptide directing secretion; that stretch reads MKNKRVLAKITALVVLLGVFFVLPSN. The 148-residue stretch at 33–180 folds into the CBM-cenC 1 domain; that stretch reads DYEVVHDTFE…IFDDVTITRK (148 aa). The 350-residue stretch at 189 to 538 folds into the GH10 domain; sequence YAANAVLKDM…KPAYNAVASI (350 aa). Glu337 (proton donor) is an active-site residue. Residue Glu460 is the Nucleophile of the active site. The interval 543 to 563 is disordered; the sequence is EWGDGNNPAGGGGGGKPEEPD. Residues 565–714 form the CBM-cenC 2 domain; the sequence is NGYYYHDTFE…YIDEAIGAVA (150 aa). Residues 728–796 enclose the Dockerin domain; it reads PPVLLGDVNG…LLRVIDKFPV (69 aa).

It belongs to the glycosyl hydrolase 10 (cellulase F) family.

The catalysed reaction is Endohydrolysis of (1-&gt;4)-beta-D-xylosidic linkages in xylans.. The protein is Endo-1,4-beta-xylanase Y (xynY) of Acetivibrio thermocellus (Hungateiclostridium thermocellum).